A 300-amino-acid polypeptide reads, in one-letter code: Putative S-adenosyl-L-methionine-dependent methyltransferase Mkms_0379 (300 aa).

S-adenosyl-L-methionine is bound by residues Asp128 and 157–158 (DL).

It belongs to the UPF0677 family.

Functionally, exhibits S-adenosyl-L-methionine-dependent methyltransferase activity. This Mycobacterium sp. (strain KMS) protein is Putative S-adenosyl-L-methionine-dependent methyltransferase Mkms_0379.